A 122-amino-acid chain; its full sequence is Large ribosomal subunit protein uL14 (122 aa).

It belongs to the universal ribosomal protein uL14 family. Part of the 50S ribosomal subunit. Forms a cluster with proteins L3 and L19. In the 70S ribosome, L14 and L19 interact and together make contacts with the 16S rRNA in bridges B5 and B8.

In terms of biological role, binds to 23S rRNA. Forms part of two intersubunit bridges in the 70S ribosome. The chain is Large ribosomal subunit protein uL14 from Maricaulis maris (strain MCS10) (Caulobacter maris).